A 388-amino-acid chain; its full sequence is MEGTPAANWSVELDLGSGVPPGEEGNRTAGPPQRNEALARVEVAVLCLILFLALSGNACVLLALRTTRHKHSRLFFFMKHLSIADLVVAVFQVLPQLLWDITFRFYGPDLLCRLVKYLQVVGMFASTYLLLLMSLDRCLAICQPLRSLRRRTDRLAVLGTWLGCLVASAPQVHIFSLREVADGVFDCWAVFIQPWGPKAYVTWITLAVYIVPVIVLAACYGLISFKIWQNLRLKTAAAAAAAEGNDAAGGAGRAALARVSSVKLISKAKIRTVKMTFIIVLAFIVCWTPFFFVQMWSVWDVNAPKEASAFIIAMLLASLNSCCNPWIYMLFTGHLFHELVQRFFCCSARYLKGSRPGETSVSKKSNSSTFVLSRRSSSQRSCSQPSSA.

The interval 1-32 (MEGTPAANWSVELDLGSGVPPGEEGNRTAGPP) is disordered. Residues 1–38 (MEGTPAANWSVELDLGSGVPPGEEGNRTAGPPQRNEAL) lie on the Extracellular side of the membrane. Asparagine 8 and asparagine 26 each carry an N-linked (GlcNAc...) asparagine glycan. The chain crosses the membrane as a helical span at residues 39–63 (ARVEVAVLCLILFLALSGNACVLLA). Over 64 to 74 (LRTTRHKHSRL) the chain is Cytoplasmic. A helical membrane pass occupies residues 75–97 (FFFMKHLSIADLVVAVFQVLPQL). Topologically, residues 98 to 113 (LWDITFRFYGPDLLCR) are extracellular. Cysteine 112 and cysteine 187 form a disulfide bridge. A helical transmembrane segment spans residues 114–135 (LVKYLQVVGMFASTYLLLLMSL). Over 136 to 154 (DRCLAICQPLRSLRRRTDR) the chain is Cytoplasmic. Residues 155–175 (LAVLGTWLGCLVASAPQVHIF) traverse the membrane as a helical segment. Topologically, residues 176-202 (SLREVADGVFDCWAVFIQPWGPKAYVT) are extracellular. Residues 203–225 (WITLAVYIVPVIVLAACYGLISF) traverse the membrane as a helical segment. Residues 226–274 (KIWQNLRLKTAAAAAAAEGNDAAGGAGRAALARVSSVKLISKAKIRTVK) are Cytoplasmic-facing. A helical membrane pass occupies residues 275 to 293 (MTFIIVLAFIVCWTPFFFV). Residues 294-308 (QMWSVWDVNAPKEAS) are Extracellular-facing. The helical transmembrane segment at 309–331 (AFIIAMLLASLNSCCNPWIYMLF) threads the bilayer. The Cytoplasmic portion of the chain corresponds to 332 to 388 (TGHLFHELVQRFFCCSARYLKGSRPGETSVSKKSNSSTFVLSRRSSSQRSCSQPSSA). The disordered stretch occupies residues 354–388 (SRPGETSVSKKSNSSTFVLSRRSSSQRSCSQPSSA). Phosphoserine occurs at positions 365 and 367. Over residues 365–388 (SNSSTFVLSRRSSSQRSCSQPSSA) the composition is skewed to low complexity.

The protein belongs to the G-protein coupled receptor 1 family. Vasopressin/oxytocin receptor subfamily.

It is found in the cell membrane. Functionally, receptor for oxytocin. The activity of this receptor is mediated by G proteins which activate a phosphatidylinositol-calcium second messenger system. In Rattus norvegicus (Rat), this protein is Oxytocin receptor (Oxtr).